Consider the following 1413-residue polypeptide: Zinc finger protein 609 (1413 aa).

Disordered regions lie at residues 1–26 (MSLS…SGDE), 47–196 (QKLE…GRGS), 354–484 (RFCD…EPTL), 517–659 (AHAH…RPIA), and 695–765 (PNSP…AAGD). S358, S361, and S379 each carry phosphoserine. A Phosphothreonine modification is found at T381. The segment covering 386-405 (AAAASDSKGTSSSSKTRAGA) has biased composition (low complexity). Residues S413, S433, S446, S452, S467, and S470 each carry the phosphoserine modification. The span at 423–437 (ASSTSEDVKASPSSA) shows a compositional bias: polar residues. Residue K479 forms a Glycyl lysine isopeptide (Lys-Gly) (interchain with G-Cter in SUMO2) linkage. The segment at 495 to 520 (IDCPHPNCNKKYKHINGLKYHQAHAH) adopts a C2H2-type zinc-finger fold. Residues 519 to 529 (AHTDDDSKPEA) show a composition bias toward basic and acidic residues. Phosphoserine is present on residues S533, S575, and S577. Residues 625–648 (SLERKCMEKEKCKKPSSLKSEKIP) show a composition bias toward basic and acidic residues. The segment covering 725-735 (DKKKKDKKKKD) has biased composition (basic residues). S742 carries the phosphoserine modification. At T745 the chain carries Phosphothreonine. Residues 750–763 (CRAEEGKSPFRDAA) show a composition bias toward basic and acidic residues. S757 carries the phosphoserine modification. A Glycyl lysine isopeptide (Lys-Gly) (interchain with G-Cter in SUMO2) cross-link involves residue K788. A compositionally biased stretch (polar residues) spans 797 to 843 (FTDNAPSPSIGGSSRLDSTTPTQPLTPLHVVTQNGAEASSVKTNSPA). Disordered stretches follow at residues 797–962 (FTDN…VIQQ), 1004–1127 (YEEQ…RQAE), 1154–1221 (IKSE…SPLT), and 1273–1369 (SKVS…STHH). S803 carries the post-translational modification Phosphoserine. Position 822 is a phosphothreonine (T822). Residues S841, S845, and S848 each carry the phosphoserine modification. Positions 854–875 (GEGKVDSAKSKDPEQLVKEGAK) are enriched in basic and acidic residues. Residues 902-916 (YAQSSPGTLTSSSQA) show a composition bias toward polar residues. Basic and acidic residues predominate over residues 925–949 (TKKDEEPESVEGKVKNDVCEEKKPE). A compositionally biased stretch (polar residues) spans 950-962 (LSNSSQQPSVIQQ). The segment covering 1022 to 1044 (GLDKKTEMGLKEREASLKEEWKQ) has biased composition (basic and acidic residues). A Phosphoserine modification is found at S1057. Residue K1063 forms a Glycyl lysine isopeptide (Lys-Gly) (interchain with G-Cter in SUMO2) linkage. 3 stretches are compositionally biased toward basic and acidic residues: residues 1099–1115 (LKGK…EASE), 1154–1189 (IKSE…KEST), and 1197–1210 (PSEE…EPRP). K1155 participates in a covalent cross-link: Glycyl lysine isopeptide (Lys-Gly) (interchain with G-Cter in SUMO2). Polar residues predominate over residues 1288-1298 (PSVSCKASSES). A Glycyl lysine isopeptide (Lys-Gly) (interchain with G-Cter in SUMO2) cross-link involves residue K1299. Residues 1330–1348 (GCGVVGGGGSCGSVAGAGG) show a composition bias toward gly residues.

Interacts (via N-terminus) with NIPBL. Interacts with the multiprotein complex Integrator. In terms of tissue distribution, expressed in myoblasts. Expressed in neurons in various brain regions, including striatum, prefrontal cortex, olfactory bulb, midbrain, cerebellum and hippocampus. Expressed in neural stem cells (at protein level). Expressed in thymocytes.

It localises to the nucleus. In terms of biological role, transcription factor, which activates RAG1, and possibly RAG2, transcription. Through the regulation of RAG1/2 expression, may regulate thymocyte maturation. Along with NIPBL and the multiprotein complex Integrator, promotes cortical neuron migration during brain development by regulating the transcription of crucial genes in this process. Preferentially binds promoters containing paused RNA polymerase II. Up-regulates the expression of SEMA3A, NRP1, PLXND1 and GABBR2 genes, among others. Involved in regulation of myoblast proliferation during myogenesis. The protein is Zinc finger protein 609 (Znf609) of Mus musculus (Mouse).